The sequence spans 155 residues: Pathogenesis-related protein 2 (155 aa).

The protein belongs to the BetVI family.

The polypeptide is Pathogenesis-related protein 2 (Phaseolus vulgaris (Kidney bean)).